The following is a 158-amino-acid chain: Putative peptidoglycan-binding-like protein (158 aa).

The signal sequence occupies residues 1–24; it reads MRSPKVKFLTIFTFCIFITKMSFA.

This sequence belongs to the IagB/IpgF/P19 family.

The protein resides in the periplasm. This chain is Putative peptidoglycan-binding-like protein (pbl), found in Escherichia coli (strain K12).